We begin with the raw amino-acid sequence, 401 residues long: Chorismate synthase (401 aa).

NADP(+) is bound by residues Arg-40 and Arg-46. Residues 135-137, 256-257, Gly-302, 317-321, and Arg-343 contribute to the FMN site; these read RAS, QA, and KPISS.

It belongs to the chorismate synthase family. Homotetramer. Requires FMNH2 as cofactor.

The enzyme catalyses 5-O-(1-carboxyvinyl)-3-phosphoshikimate = chorismate + phosphate. Its pathway is metabolic intermediate biosynthesis; chorismate biosynthesis; chorismate from D-erythrose 4-phosphate and phosphoenolpyruvate: step 7/7. Functionally, catalyzes the anti-1,4-elimination of the C-3 phosphate and the C-6 proR hydrogen from 5-enolpyruvylshikimate-3-phosphate (EPSP) to yield chorismate, which is the branch point compound that serves as the starting substrate for the three terminal pathways of aromatic amino acid biosynthesis. This reaction introduces a second double bond into the aromatic ring system. The sequence is that of Chorismate synthase from Saccharopolyspora erythraea (strain ATCC 11635 / DSM 40517 / JCM 4748 / NBRC 13426 / NCIMB 8594 / NRRL 2338).